Consider the following 211-residue polypeptide: Histidine biosynthesis bifunctional protein HisIE (211 aa).

The phosphoribosyl-AMP cyclohydrolase stretch occupies residues 1 to 122 (MSVKAAEVSS…DPQEESQMVW (122 aa)). The segment at 123–211 (LHQLEQLLAA…VINKLKERHK (89 aa)) is phosphoribosyl-ATP pyrophosphohydrolase.

In the N-terminal section; belongs to the PRA-CH family. This sequence in the C-terminal section; belongs to the PRA-PH family.

It localises to the cytoplasm. It carries out the reaction 1-(5-phospho-beta-D-ribosyl)-ATP + H2O = 1-(5-phospho-beta-D-ribosyl)-5'-AMP + diphosphate + H(+). The catalysed reaction is 1-(5-phospho-beta-D-ribosyl)-5'-AMP + H2O = 1-(5-phospho-beta-D-ribosyl)-5-[(5-phospho-beta-D-ribosylamino)methylideneamino]imidazole-4-carboxamide. Its pathway is amino-acid biosynthesis; L-histidine biosynthesis; L-histidine from 5-phospho-alpha-D-ribose 1-diphosphate: step 2/9. The protein operates within amino-acid biosynthesis; L-histidine biosynthesis; L-histidine from 5-phospho-alpha-D-ribose 1-diphosphate: step 3/9. The polypeptide is Histidine biosynthesis bifunctional protein HisIE (Vibrio vulnificus (strain YJ016)).